The primary structure comprises 259 residues: Thiazole synthase (259 aa).

The Schiff-base intermediate with DXP role is filled by lysine 100. Residues glycine 161, alanine 187 to glycine 188, and alanine 209 to serine 210 each bind 1-deoxy-D-xylulose 5-phosphate.

The protein belongs to the ThiG family. In terms of assembly, homotetramer. Forms heterodimers with either ThiH or ThiS.

It is found in the cytoplasm. It catalyses the reaction [ThiS sulfur-carrier protein]-C-terminal-Gly-aminoethanethioate + 2-iminoacetate + 1-deoxy-D-xylulose 5-phosphate = [ThiS sulfur-carrier protein]-C-terminal Gly-Gly + 2-[(2R,5Z)-2-carboxy-4-methylthiazol-5(2H)-ylidene]ethyl phosphate + 2 H2O + H(+). It participates in cofactor biosynthesis; thiamine diphosphate biosynthesis. In terms of biological role, catalyzes the rearrangement of 1-deoxy-D-xylulose 5-phosphate (DXP) to produce the thiazole phosphate moiety of thiamine. Sulfur is provided by the thiocarboxylate moiety of the carrier protein ThiS. In vitro, sulfur can be provided by H(2)S. This Salinispora arenicola (strain CNS-205) protein is Thiazole synthase.